The chain runs to 54 residues: Large ribosomal subunit protein bL33 (54 aa).

It belongs to the bacterial ribosomal protein bL33 family.

This Thermobifida fusca (strain YX) protein is Large ribosomal subunit protein bL33.